The sequence spans 329 residues: MQNSIMDFLRPRLVDIEQISATHTKVTLEPLERGFGHTLGNALRRILLSSMPGCAVTEVEIDGVLHEYSTKEGVQEDVLEILLNLKALAVKVYGKDETLLTLHKSGIGSITAADIIHDGDVEIIKPQHVICHLTDENASIKMRIKVQRGRGYIPASSRVHLEEDSRPIGCLLVDACYSPINRISYNVEAARVEQRTDLDKLVIEMETNGTIDPEEAIRRAATILAEQLEAFVDLRDIREPEFKEEKPEFEPILLRPVDDLELTVRSANCLKAEAIHYIGDLVQRTEVELLKTPNLGKKSLTEIKDVLASRSLSLGMRLENWPPSSILDE.

The tract at residues 1–235 (MQNSIMDFLR…EQLEAFVDLR (235 aa)) is alpha N-terminal domain (alpha-NTD). The alpha C-terminal domain (alpha-CTD) stretch occupies residues 249 to 329 (FEPILLRPVD…NWPPSSILDE (81 aa)).

It belongs to the RNA polymerase alpha chain family. In terms of assembly, homodimer. The RNAP catalytic core consists of 2 alpha, 1 beta, 1 beta' and 1 omega subunit. When a sigma factor is associated with the core the holoenzyme is formed, which can initiate transcription.

The enzyme catalyses RNA(n) + a ribonucleoside 5'-triphosphate = RNA(n+1) + diphosphate. In terms of biological role, DNA-dependent RNA polymerase catalyzes the transcription of DNA into RNA using the four ribonucleoside triphosphates as substrates. The protein is DNA-directed RNA polymerase subunit alpha of Buchnera aphidicola subsp. Acyrthosiphon pisum (strain APS) (Acyrthosiphon pisum symbiotic bacterium).